A 4568-amino-acid polypeptide reads, in one-letter code: MDSGNESSIIQPPNLKTAAEGDVKEYIVQVVTSHFGLSPRDQTTLDVELTAATTFITDFINEADKNVIVVDRVVAREQGDQPAGAESGGEESAPATFQVHDGLFMTDRGQAMMFVKQSNVIEAEKKIATQVSAFPLNGGSAWEQLHFLMSRLLNPYCKSFIGQSGRGERDGDKLAPTVQKCFTEAEAALLHLQQNIDIPEINLVVNQHILDAIEQAGKENRRAKIEDLGDLVEDANFLNALQSGCNRWVKEIRKVTQLERDPSSGTSLQEMTFWLNLERALLKISQKRDGEEVTLTLEALKCGKRFHATVGFDSDNGLKQKLAVVQDYNTLMKEFPLSELVSATDVPKLMHAVVGIFLHLRKLRSTKYPLQRALRLVEAISRDLNSQLLKVLSSYNLMRTPIAEFNEIMSQCQALFSKWDDEYDKFIALLRDINKKKRDDPSKLSWKVTAVHKRLETRLMQILQFRKQHEQFRTVIERVLRPVGNGSREREQLMIDSSEGEKSPDEQVDIAYEFLKNVDFLDVDSPAWENAFKRYEDQIGVVETAITTRLKSQLESSRNSNEMFSIFSRYNALFIRPRIRGAIYEYQTRLINRVKEDINELQARFTKARGEQGVKIMQTVGLPPFSAKIMWIRNYERQLQRYMKRVEDVLGKQWENHVDGRQLKADGDNFKVKLNTQPMFDEWVESVQSQNWTLPNKILTVDRVQVDGRMQLQLKINYHSDSSVLYKEVSHLKSMGFRVPLKIVNWAHQANQMRPSATSLIEAARTFASVNAALASVQGVDSLLASYKKDIQNQLIEGATLGWDSYKVDQYQLKLAETVNTYQERCEELLNVVRIVNADLNVLKSCRYDKETIENLLTSIQKGVDQLSLGNYSNLAQWVNTLDRQIETILARRVEDAIRVWTLVFSQSEEVEELRERQVVLPTVKNVVVDLCMTAQTLYISPSTRETREKILEQLYEWHSVCTAQMRISGKRFQMVMNEEIEPETYHNILNVMPEGQACLEKAYDCVNGIMSDLEEYLSEWLSYQSLWVLQAEQLFEMLGTSLSKWMKTLMEIRKGRLVFDTQDTRKVIFPVSVEYGKAQQKILFKYDYWHKEMLVKFGAVVGDEMQKFFNSVSKWRNVLETQSVDGGSTSDTIGLISFVQSLKKQTKSGQDAVDLYRSSQRLLNQQRYQFPAQWLYSENVEGEWSAFTEILSLRDASIQTQMMNLQTKFAQEDELVEKRTVETLTEWNKSKPVEGAQRPQEALNVITAFEAKLNKLTEERNKMRKARVALDLSDSAHAPSEGDKLTVATEELAAMKDVWKALQPVYTGIDEAKEKTWLSVQPRKIRQSLDELMNQLKQLPVKCRTYKSYEHVKQMLHTYGKMNMLVAELKSEALKERHWHQMMKEMRVNWNLSDLTLGQVWDADILRHEHTIKKILLVAQGEMALEEFLREMREYWQNYEVELVNYQNKTRLIKGWDDLFNKLKEHQNSLSAMKLSPYYKQFEESAQSWDEKLNKINAMFDVWIDVQRRWVYLEGLFSGSAEISTLLPFESSRFATITTDVLALMKKVAASPRILDVVNMQGAQRLLERLADMLAKIQKALGEYLERERSSFPRFYFVGDEDLLEIMGNSKDITRIQKHLKKMFAGITAIDINEEDRSITAFHSREGEKVDLVKIVSTKDVRINDWLQALEAEMKHTLARQLAASLTHFSKMNIQTMTTDDYVEWLDKFPAQVITLTAEIWWCDEMEKTLADGKGAENVEQAVVKTLELLADSVLKEQPPIRRKKMEALITELVHKRDTCRKLVSMKIRAANDFGWLQCMRFYFDPKQVDPVRCCVVKMANSQFFYGFEYLGIQERLVRTPLTDRCYLTMTQALHSRLGGSPFGPAGTGKTESVKALGHQLGRFVLVFNCDETFDFQAMGRILVGLCQVGAWGCFDEFNRLEERMLSAVSQQIQTIQEAVRAGGDMSVDLVGKRLNVNSNIGIFITMNPGYSGRSNLPDNLKQLFRSLAMTQPDRQLIAQVMLFSQGFRTAETLANKIVPLFILCKEQLSDQCHYDFGLRALKYVLVSAGNIKRDKLDKMGSAALEDVAEQQMLIQSVCETLVPKLVNEDIALLFSLLSDVFPGIHYTANQMRELRQQLSTVCDEHLLIYSDVQGEMGSMWLDKVLQLYQITNLNHGLMLVGSSGSGKTMAWKVLLKALERWENVEGVAHVIDAKAMSKDSLYGVMDPNTREWTDGLFTSVIRKIIDNVRGEADRRQWIIFDGDVDPEWVENLNSVLDDNKLLTLPNGERLSIPPNVRIIFEVADLKYATLATVSRCGMVWFSEEVVTSEMLFERYLSIIRRVPLDSDSAISFSSSSAPVNLIGEDAKPTRSIEIQRTAALALQTHFSPDGIVPGSLKYAVSELEHIMPPTPQRLLSSFFSMMSYSIRKIVSHDEGLIDDSVEIDQIQSFVLRSMLTNLVWAFSGDGKWKSREMMSDFIRQATTISLPPNQQACLIDYEVQLSGDWQPWLSKVPTMEIESHRVAAADLVVPTIDTVRHEMLLAAWLAEHKPLVLCGPPGSGKTMTLLAALRSQQEMEVVNVNFSSSTTPELLLRTFDHYCEYRRTPNGVVLAPVQLSQWLVIFCDEINLPAPDKYGTQRVISFLRQLVELNGFYRTSDHSWVSLERIQFVGACNPPTDPGRHPMTSRFLRHVPIVYVDYPGQTSLQQIYGTFNRAMLKMTPAVRGLADQLTNAMVDVYLASQEHFTQDDQPHYVYSPRELTRWVRGISEAITPLESLSAEQLVRLWAHEAIRLFQDRLVTEEEREWTDKLVDTTAERYFGNACRLDEALKRPLLYSCWLSRNYVPVTREELQDYVSARLKGFYEEELDVKLVLFDQMLDHVLRIDRIYRQSQGHLLLIGTAGAGKTTLSRFVAWLNGLSVFQLKVHSKYTAADFDEDMRTVLRRAGCRNEKLCFIMDESNMLDTGFLERLNTLLANGEVPGLFEGDEHTTLMTQIKEGAQRQGLILDSHDELYKWFTQQVMRNLHVVFTMNPSGSGLRERASTSPALFNRCVLNWFGDWSENALYQVGSELTRTMDLDRTDYEGSVRLTPSCELVPSQPTYRDAVVNTLCLVHKTVQKFNEMETKKGHRVMACTPRHFLDFIKQFMSLFHEKRSDLEEEKIHLNIGLNKISETEEQVKELQKSLKLKSNELQEKKEAANLKLKEMLGDQQKAEEEKKFSEQLQKELAEQLKQMAEKKTFVENDLAQVEPAVAEAQTAVQGIKKSQLVEVKSMSSPPVTVKLTLEAICILLGENVGTDWKAIRQVMMKDDFMTRILQFDTELLTPEILKQMEKYIQNPDWEFDKVNRASVACGPMVKWARAQLLYSTMLHKVEPLRNELKRLEQEAAKKTQEGKVVDVRITELEESIGKYKEEYAQLIGQAENIKQDLLSVQEKVNRSTELLSSLRSERDRWSSGSAGFSQQMDSLVGDALLSSAFLAYAGYYDQMLRDEIFHKWFNHVVNAGLHFRHDLARIEYLSTVDDRLQWQLNSLPVDDLCTENAIMLHRFNRYPLIIDPSGQAVEYIMKQFAGKNIQKTSFLDESFRKNLESALRFGNSLLVQDVEAYDPILNPVLNREVKRAGGRVLITIGDQDIDLSPSFQIFMITRDSTVEFSPDICSRVTFVNFTVTSSSLASQCLNQVLRSERPDVDKKRNDLLKLQGEFAVRLRHLEKALLAALNESKGKILDDNSVIETLEKLKNEAAEVAQKSAETDKVMAEVDAVSAQYQRLSTACSHIYHTLQQLNEIHFLYHYSLDFLVEIFTHVLKTPELSSTTDYAKRLRIITTSLFQTVFRRVSRGMLHTDKVLLALLLMRIHIRSNPSAPAYEQHFDLLLGRSDFVAKNDEADSTIPGGLDFLTVENKKSIAKARKVVGFENVFAHLQHNSAAVTSWLTNDNPESNVPVVWDDADGKLSPLCIAMNSLIVVHALRPDRLMASAHRVVSTAFDDHFMQQDKVVDILSIVDNEVSPSEPVLLCSATGYDASGKIEDLAVETNRQLTSIAIGSAEGFNQADSALGTATKSGRWVLLKNVHLAPSWLAQLEKRLHSMKPHAQFRLFLTAEIHPKLPSSILRASRVVVFEPATGLKANLLRSLSSIPPQRLTKAPTERSRLYLLVCWLHALVQERLRYTPLGWSTAYEFSDADLRVACDTLDAAVDAVAQGRPNVEPERLPWTTLRTLLSQCIYGGKIDNQFDQVLLDCVLENLFTAKSFEQDHVLIPKYDGDDSLFTPNMSKKDQMIGWVEELKNEQLPAWLGLPNNAEKVLLTKRGESMLRNMLKVTDEELAFNEDGKEEVKPQWMAQLGELAKQWLQLLPKEIVKMRRTVENIKDPLFRFFEREVNLGSQLLKDIRRDLNEISAVCRAEKKQNNETRALAASLQKGEVPTGWKRYTVPREVTVMDWMTDLNERLKQLIRIGGADNLKRETFWLGGTFSPEAYITATRQQVAQANTWSLEQLNLHIHIGRTDSTDVFRISGIDIRGAKSVGGNKLELCELVKSECDIVEFSWKQDVADGTRLPLYLYGDRRQLISPLAFHLSSATVFYQRGVALVANSTL.

Residues 1-1826 (MDSGNESSII…VVKMANSQFF (1826 aa)) form a stem region. 5 coiled-coil regions span residues 587–652 (QTRL…VLGK), 814–844 (KLAETVNTYQERCEELLNVVRIVNADLNVLK), 1241–1274 (QEALNVITAFEAKLNKLTEERNKMRKARVALDLS), 1324–1340 (RKIRQSLDELMNQLKQL), and 1559–1591 (VNMQGAQRLLERLADMLAKIQKALGEYLERERS). AAA regions lie at residues 1827–2049 (YGFE…VLVS), 2118–2394 (QQLS…PTPQ), 2498–2747 (EIES…WVRG), and 2842–3111 (GFYE…GHRV). ATP-binding positions include 1865–1872 (GPAGTGKT), 2163–2170 (GSSGSGKT), 2537–2544 (GPPGSGKT), and 2880–2887 (GTAGAGKT). 3 coiled-coil regions span residues 3132 to 3229 (EKRS…AQVE), 3339 to 3432 (ARAQ…RDRW), and 3707 to 3739 (NSVIETLEKLKNEAAEVAQKSAETDKVMAEVDA). Positions 3132–3432 (EKRSDLEEEK…SSLRSERDRW (301 aa)) are stalk. AAA regions lie at residues 3496–3725 (LSTV…EVAQ) and 3954–4169 (AHRV…TLDA). The stretch at 4359–4386 (QLLKDIRRDLNEISAVCRAEKKQNNETR) forms a coiled coil.

The protein belongs to the dynein heavy chain family. As to quaternary structure, consists of at least two heavy chains and a number of intermediate and light chains.

Its subcellular location is the cytoplasm. It localises to the cytoskeleton. Cytoplasmic dynein acts as a motor for the intracellular retrograde motility of vesicles and organelles along microtubules. Dynein has ATPase activity; the force-producing power stroke is thought to occur on release of ADP. May play a role in nuclear migration in hypodermal precursor cells. May be involved in the transport of synaptic vesicle components towards the axon of the DA motor neuron. This function may involve the regulation of dynein by pct-1 and/or cdk-5. Involved in the formation of synapses in the dorsal region during synaptic remodeling of DD motor neurons. Required for anterograde trafficking of dense-core vesicles in the DB motor neuron dendrites. Required for the formation of dendritic branches of PVD sensory neurons. May also play a role in GABAergic synaptic vesicle localization in the ventral nerve cord. May play a role in the pairing of homologous chromosomes during meiosis. This is Dynein heavy chain, cytoplasmic from Caenorhabditis elegans.